We begin with the raw amino-acid sequence, 812 residues long: G patch domain-containing protein 1 homolog (812 aa).

Residues 1 to 42 (MNRKKLAAYGQEFEDDDEEGSSVSKKPTQIHEEIATDEKGKR) are disordered. Positions 29-40 (QIHEEIATDEKG) are enriched in basic and acidic residues. The G-patch domain occupies 145 to 191 (SNSIGVRMLRSMGWREGRGIGLANVKQKQKRGGESSEAQFDREQASK). Disordered regions lie at residues 384 to 416 (ANEV…FPDE) and 584 to 812 (NEIE…EEKK). Over residues 586–609 (IEMRERLLKSRAQRGAEEKKRNQS) the composition is skewed to basic and acidic residues. Acidic residues-rich tracts occupy residues 610 to 630 (DDDD…ENEA) and 653 to 668 (DGAD…EEAE). A compositionally biased stretch (basic and acidic residues) spans 669-720 (EKERQEILKKREEDLKRRREIVEKKEEENRKRVEKELKELENRDLLRVSKQQ). Residues 761 to 794 (MKKKKKDKKEKEKKKKSKKSKKSKKEKKTKRKHS) are compositionally biased toward basic residues. A compositionally biased stretch (acidic residues) spans 800-812 (DSGDNSDGWEEKK).

This sequence belongs to the GPATCH1 family.

In Caenorhabditis elegans, this protein is G patch domain-containing protein 1 homolog.